We begin with the raw amino-acid sequence, 1000 residues long: DENN domain-containing protein 2A (1000 aa).

Disordered regions lie at residues Met1–Gln155, Asp174–Tyr328, Lys427–Leu464, and Lys491–His525. The segment covering Gln34–Pro43 has biased composition (polar residues). Basic and acidic residues-rich tracts occupy residues Ile56 to Pro70, Asp79 to Ala117, Ser140 to Gln155, and His221 to Gly237. Composition is skewed to pro residues over residues Pro249–Pro258 and Pro288–Thr307. The span at Lys427 to Arg436 shows a compositional bias: basic and acidic residues. Residues Leu496–Lys506 are compositionally biased toward polar residues. Ser544 carries the phosphoserine modification. Residues Glu559–Ile708 enclose the uDENN domain. The 134-residue stretch at Arg730–Glu863 folds into the cDENN domain. Positions Arg865–Ala960 constitute a dDENN domain.

Its subcellular location is the cytoplasm. The protein localises to the cytoskeleton. In terms of biological role, guanine nucleotide exchange factor (GEF) which may activate RAB9A and RAB9B. Promotes the exchange of GDP to GTP, converting inactive GDP-bound Rab proteins into their active GTP-bound form. May play a role in late endosomes back to trans-Golgi network/TGN transport. This is DENN domain-containing protein 2A (Dennd2a) from Mus musculus (Mouse).